A 490-amino-acid polypeptide reads, in one-letter code: Metal cation symporter ZIP14 (490 aa).

The signal sequence occupies residues 1-28; that stretch reads MKLLHPAFQSCLLLTLLGLWRTTPEAHA. The Extracellular segment spans residues 29–155; the sequence is SSPGAPAISA…PSAVEVWGYG (127 aa). 3 N-linked (GlcNAc...) asparagine glycosylation sites follow: N75, N85, and N100. The helical transmembrane segment at 156 to 176 threads the bilayer; that stretch reads LLCVTVISLCSLLGASVVPFM. The Cytoplasmic portion of the chain corresponds to 177–184; that stretch reads KKTFYKRL. The helical transmembrane segment at 185–205 threads the bilayer; that stretch reads LLYFIALAIGTLYSNALFQLI. Over 206–222 the chain is Extracellular; that stretch reads PEAFGFNPLEDYYVSKS. The chain crosses the membrane as a helical span at residues 223-243; the sequence is AVVFGGFYLFFFTEKILKILL. Residues 244 to 395 are Cytoplasmic-facing; sequence KQKNEHHHGH…LLNAGMSIQQ (152 aa). The HHHGHXHX-motif signature appears at 249–256; that stretch reads HHHGHSHY. Positions 374–379 match the XEXPHE-motif motif; the sequence is EEFPHE. The chain crosses the membrane as a helical span at residues 396 to 416; it reads ALFFNFLSACCCYLGLAFGIL. The Extracellular segment spans residues 417-422; the sequence is AGSHFS. A helical transmembrane segment spans residues 423 to 443; sequence ANWIFALAGGMFLYISLADMF. Residues 444–458 lie on the Cytoplasmic side of the membrane; that stretch reads PEMNEVCQEDERKGS. The helical transmembrane segment at 459–479 threads the bilayer; sequence ILIPFVIQNLGLLTGFTIMVV. The Extracellular segment spans residues 480-490; the sequence is LTMYSGQIQIG.

It belongs to the ZIP transporter (TC 2.A.5) family. As to quaternary structure, homotrimer. In terms of processing, ubiquitinated. Ubiquitination occurs upon iron depletion. The ubiquitinated form undergoes proteasomal degradation. Post-translationally, N-glycosylated. N-glycosylation at Asn-100 is required for iron-regulated extraction of the transporter from membranes and subsequent proteasomal degradation.

The protein resides in the cell membrane. Its subcellular location is the apical cell membrane. It is found in the basolateral cell membrane. It localises to the early endosome membrane. The protein localises to the late endosome membrane. The protein resides in the lysosome membrane. The catalysed reaction is Zn(2+)(out) + 2 hydrogencarbonate(out) = Zn(2+)(in) + 2 hydrogencarbonate(in). The enzyme catalyses Mn(2+)(out) + 2 hydrogencarbonate(out) = Mn(2+)(in) + 2 hydrogencarbonate(in). It catalyses the reaction Fe(2+)(out) + 2 hydrogencarbonate(out) = Fe(2+)(in) + 2 hydrogencarbonate(in). It carries out the reaction Cd(2+)(out) + 2 hydrogencarbonate(out) = Cd(2+)(in) + 2 hydrogencarbonate(in). Functionally, electroneutral transporter of the plasma membrane mediating the cellular uptake of the divalent metal cations zinc, manganese and iron that are important for tissue homeostasis, metabolism, development and immunity. Functions as an energy-dependent symporter, transporting through the membranes an electroneutral complex composed of a divalent metal cation and two bicarbonate anions. Beside these endogenous cellular substrates, can also import cadmium a non-essential metal which is cytotoxic and carcinogenic. Controls the cellular uptake by the intestinal epithelium of systemic zinc, which is in turn required to maintain tight junctions and the intestinal permeability. Modifies the activity of zinc-dependent phosphodiesterases, thereby indirectly regulating G protein-coupled receptor signaling pathways important for gluconeogenesis and chondrocyte differentiation. Regulates insulin receptor signaling, glucose uptake, glycogen synthesis and gluconeogenesis in hepatocytes through the zinc-dependent intracellular catabolism of insulin. Through zinc cellular uptake also plays a role in the adaptation of cells to endoplasmic reticulum stress. Major manganese transporter of the basolateral membrane of intestinal epithelial cells, it plays a central role in manganese systemic homeostasis through intestinal manganese uptake. Also involved in manganese extracellular uptake by cells of the blood-brain barrier. May also play a role in manganese and zinc homeostasis participating in their elimination from the blood through the hepatobiliary excretion. Also functions in the extracellular uptake of free iron. May also function intracellularly and mediate the transport from endosomes to cytosol of iron endocytosed by transferrin. Plays a role in innate immunity by regulating the expression of cytokines by activated macrophages. The sequence is that of Metal cation symporter ZIP14 from Pongo abelii (Sumatran orangutan).